Here is a 70-residue protein sequence, read N- to C-terminus: MRIYNCSYCGRPIPPGYGIMYVRVDGVVLRFCSRRCFVSMVKMGKNPQKQAWVRKIRRAKSAAQSKSSSK.

Zn(2+)-binding residues include Cys-6, Cys-9, Cys-32, and Cys-36. The C4-type zinc finger occupies 6–36 (CSYCGRPIPPGYGIMYVRVDGVVLRFCSRRC).

It belongs to the eukaryotic ribosomal protein eL24 family. As to quaternary structure, part of the 50S ribosomal subunit. Forms a cluster with proteins L3 and L14. Zn(2+) serves as cofactor.

Functionally, binds to the 23S rRNA. The polypeptide is Large ribosomal subunit protein eL24 (Caldivirga maquilingensis (strain ATCC 700844 / DSM 13496 / JCM 10307 / IC-167)).